A 306-amino-acid polypeptide reads, in one-letter code: Ribonuclease Z (306 aa).

Zn(2+)-binding residues include H63, H65, D67, H68, H141, D211, and H269. The Proton acceptor role is filled by D67.

This sequence belongs to the RNase Z family. Homodimer. It depends on Zn(2+) as a cofactor.

The catalysed reaction is Endonucleolytic cleavage of RNA, removing extra 3' nucleotides from tRNA precursor, generating 3' termini of tRNAs. A 3'-hydroxy group is left at the tRNA terminus and a 5'-phosphoryl group is left at the trailer molecule.. Its function is as follows. Zinc phosphodiesterase, which displays some tRNA 3'-processing endonuclease activity. Probably involved in tRNA maturation, by removing a 3'-trailer from precursor tRNA. This Staphylococcus aureus (strain MSSA476) protein is Ribonuclease Z.